Here is a 119-residue protein sequence, read N- to C-terminus: Holo-[acyl-carrier-protein] synthase (119 aa).

Mg(2+) contacts are provided by aspartate 7 and glutamate 56.

The protein belongs to the P-Pant transferase superfamily. AcpS family. Mg(2+) is required as a cofactor.

Its subcellular location is the cytoplasm. The catalysed reaction is apo-[ACP] + CoA = holo-[ACP] + adenosine 3',5'-bisphosphate + H(+). Transfers the 4'-phosphopantetheine moiety from coenzyme A to a Ser of acyl-carrier-protein. The sequence is that of Holo-[acyl-carrier-protein] synthase from Chlamydia trachomatis serovar L2 (strain ATCC VR-902B / DSM 19102 / 434/Bu).